Reading from the N-terminus, the 240-residue chain is 2,3,4,5-tetrahydropyridine-2,6-dicarboxylate N-acetyltransferase (240 aa).

The protein belongs to the transferase hexapeptide repeat family. DapH subfamily.

The enzyme catalyses (S)-2,3,4,5-tetrahydrodipicolinate + acetyl-CoA + H2O = L-2-acetamido-6-oxoheptanedioate + CoA. The protein operates within amino-acid biosynthesis; L-lysine biosynthesis via DAP pathway; LL-2,6-diaminopimelate from (S)-tetrahydrodipicolinate (acetylase route): step 1/3. Functionally, catalyzes the transfer of an acetyl group from acetyl-CoA to tetrahydrodipicolinate. The polypeptide is 2,3,4,5-tetrahydropyridine-2,6-dicarboxylate N-acetyltransferase (Bacillus mycoides (strain KBAB4) (Bacillus weihenstephanensis)).